An 82-amino-acid polypeptide reads, in one-letter code: MAVKERVGVVVSDKMQKTVVVAVENRAPHPKYGKIVVKTRRYKAHDENNEAKVGDRVRIRETRPLSRTKRWVIAEILSPRTA.

The protein belongs to the universal ribosomal protein uS17 family. As to quaternary structure, part of the 30S ribosomal subunit.

One of the primary rRNA binding proteins, it binds specifically to the 5'-end of 16S ribosomal RNA. This chain is Small ribosomal subunit protein uS17, found in Thermosynechococcus vestitus (strain NIES-2133 / IAM M-273 / BP-1).